The primary structure comprises 235 residues: 7-cyano-7-deazaguanine synthase (235 aa).

10–20 (FSGGQDSTTCL) contributes to the ATP binding site. 4 residues coordinate Zn(2+): C198, C213, C216, and C219.

This sequence belongs to the QueC family. Requires Zn(2+) as cofactor.

The catalysed reaction is 7-carboxy-7-deazaguanine + NH4(+) + ATP = 7-cyano-7-deazaguanine + ADP + phosphate + H2O + H(+). It functions in the pathway purine metabolism; 7-cyano-7-deazaguanine biosynthesis. Its function is as follows. Catalyzes the ATP-dependent conversion of 7-carboxy-7-deazaguanine (CDG) to 7-cyano-7-deazaguanine (preQ(0)). The polypeptide is 7-cyano-7-deazaguanine synthase (Paracidovorax citrulli (strain AAC00-1) (Acidovorax citrulli)).